Here is a 142-residue protein sequence, read N- to C-terminus: Movement protein (142 aa).

Residues 1 to 142 (MDLPEDQARF…LDRSESLSRY (142 aa)) are disordered. Composition is skewed to polar residues over residues 9 to 22 (RFTN…TSME) and 33 to 43 (LYQSASRSQMA). Low complexity predominate over residues 50–62 (SIISRTSSWRTSP). 2 stretches are compositionally biased toward polar residues: residues 74 to 95 (MNSI…SASP) and 113 to 124 (TTLQRTNSGFST). Residues 125–142 (KETEMPRLLDRSESLSRY) are compositionally biased toward basic and acidic residues.

The protein belongs to the luteoviruses movement protein family.

Transports viral genome to neighboring plant cells directly through plasmosdesmata, without any budding. The movement protein allows efficient cell to cell propagation, by bypassing the host cell wall barrier. The sequence is that of Movement protein from Cicer arietinum (Chickpea).